The sequence spans 347 residues: Quinolinate synthase (347 aa).

H47 and S68 together coordinate iminosuccinate. C113 contacts [4Fe-4S] cluster. Iminosuccinate-binding positions include Y139–N141 and S156. C200 lines the [4Fe-4S] cluster pocket. Residues H226–E228 and T243 each bind iminosuccinate. C297 is a binding site for [4Fe-4S] cluster.

The protein belongs to the quinolinate synthase family. Type 1 subfamily. [4Fe-4S] cluster serves as cofactor.

The protein resides in the cytoplasm. It catalyses the reaction iminosuccinate + dihydroxyacetone phosphate = quinolinate + phosphate + 2 H2O + H(+). It participates in cofactor biosynthesis; NAD(+) biosynthesis; quinolinate from iminoaspartate: step 1/1. Catalyzes the condensation of iminoaspartate with dihydroxyacetone phosphate to form quinolinate. This is Quinolinate synthase from Escherichia fergusonii (strain ATCC 35469 / DSM 13698 / CCUG 18766 / IAM 14443 / JCM 21226 / LMG 7866 / NBRC 102419 / NCTC 12128 / CDC 0568-73).